A 119-amino-acid polypeptide reads, in one-letter code: Ribonuclease P protein component (119 aa).

The protein belongs to the RnpA family. As to quaternary structure, consists of a catalytic RNA component (M1 or rnpB) and a protein subunit.

It carries out the reaction Endonucleolytic cleavage of RNA, removing 5'-extranucleotides from tRNA precursor.. Its function is as follows. RNaseP catalyzes the removal of the 5'-leader sequence from pre-tRNA to produce the mature 5'-terminus. It can also cleave other RNA substrates such as 4.5S RNA. The protein component plays an auxiliary but essential role in vivo by binding to the 5'-leader sequence and broadening the substrate specificity of the ribozyme. The sequence is that of Ribonuclease P protein component from Listeria monocytogenes serotype 4a (strain HCC23).